The chain runs to 370 residues: Serine/threonine-protein kinase RIM11/MSD1 (370 aa).

The region spanning 39 to 322 (FPTTEVVGHG…ALQCLCSPYF (284 aa)) is the Protein kinase domain. Residues 45-53 (VGHGSFGVV) and K68 each bind ATP. Residue D164 is the Proton acceptor of the active site. A Phosphotyrosine modification is found at Y199.

This sequence belongs to the protein kinase superfamily. CMGC Ser/Thr protein kinase family. GSK-3 subfamily. As to quaternary structure, interacts with TDA1.

It carries out the reaction L-seryl-[protein] + ATP = O-phospho-L-seryl-[protein] + ADP + H(+). The enzyme catalyses L-threonyl-[protein] + ATP = O-phospho-L-threonyl-[protein] + ADP + H(+). Its function is as follows. Serine/threonine protein kinase that is thought to function in regulating kinetochore activity and entry into meiosis. Could phosphorylate IME1. This Saccharomyces cerevisiae (strain ATCC 204508 / S288c) (Baker's yeast) protein is Serine/threonine-protein kinase RIM11/MSD1 (RIM11).